We begin with the raw amino-acid sequence, 469 residues long: ATP synthase subunit beta (469 aa).

Gly156–Thr163 contributes to the ATP binding site.

The protein belongs to the ATPase alpha/beta chains family. F-type ATPases have 2 components, CF(1) - the catalytic core - and CF(0) - the membrane proton channel. CF(1) has five subunits: alpha(3), beta(3), gamma(1), delta(1), epsilon(1). CF(0) has three main subunits: a(1), b(2) and c(9-12). The alpha and beta chains form an alternating ring which encloses part of the gamma chain. CF(1) is attached to CF(0) by a central stalk formed by the gamma and epsilon chains, while a peripheral stalk is formed by the delta and b chains.

The protein resides in the cell membrane. It catalyses the reaction ATP + H2O + 4 H(+)(in) = ADP + phosphate + 5 H(+)(out). Its function is as follows. Produces ATP from ADP in the presence of a proton gradient across the membrane. The catalytic sites are hosted primarily by the beta subunits. In Lactococcus lactis subsp. lactis (strain IL1403) (Streptococcus lactis), this protein is ATP synthase subunit beta.